The chain runs to 309 residues: 4-hydroxy-3-methylbut-2-enyl diphosphate reductase (309 aa).

Cys13 provides a ligand contact to [4Fe-4S] cluster. 2 residues coordinate (2E)-4-hydroxy-3-methylbut-2-enyl diphosphate: His42 and His75. Positions 42 and 75 each coordinate dimethylallyl diphosphate. Positions 42 and 75 each coordinate isopentenyl diphosphate. Cys97 is a binding site for [4Fe-4S] cluster. Residue His125 coordinates (2E)-4-hydroxy-3-methylbut-2-enyl diphosphate. His125 is a binding site for dimethylallyl diphosphate. His125 serves as a coordination point for isopentenyl diphosphate. Glu127 functions as the Proton donor in the catalytic mechanism. Thr165 serves as a coordination point for (2E)-4-hydroxy-3-methylbut-2-enyl diphosphate. Residue Cys195 coordinates [4Fe-4S] cluster. Residues Ser223, Ser224, Asn225, and Ser267 each contribute to the (2E)-4-hydroxy-3-methylbut-2-enyl diphosphate site. Residues Ser223, Ser224, Asn225, and Ser267 each coordinate dimethylallyl diphosphate. 4 residues coordinate isopentenyl diphosphate: Ser223, Ser224, Asn225, and Ser267.

This sequence belongs to the IspH family. [4Fe-4S] cluster is required as a cofactor.

It carries out the reaction isopentenyl diphosphate + 2 oxidized [2Fe-2S]-[ferredoxin] + H2O = (2E)-4-hydroxy-3-methylbut-2-enyl diphosphate + 2 reduced [2Fe-2S]-[ferredoxin] + 2 H(+). The catalysed reaction is dimethylallyl diphosphate + 2 oxidized [2Fe-2S]-[ferredoxin] + H2O = (2E)-4-hydroxy-3-methylbut-2-enyl diphosphate + 2 reduced [2Fe-2S]-[ferredoxin] + 2 H(+). It participates in isoprenoid biosynthesis; dimethylallyl diphosphate biosynthesis; dimethylallyl diphosphate from (2E)-4-hydroxy-3-methylbutenyl diphosphate: step 1/1. It functions in the pathway isoprenoid biosynthesis; isopentenyl diphosphate biosynthesis via DXP pathway; isopentenyl diphosphate from 1-deoxy-D-xylulose 5-phosphate: step 6/6. Catalyzes the conversion of 1-hydroxy-2-methyl-2-(E)-butenyl 4-diphosphate (HMBPP) into a mixture of isopentenyl diphosphate (IPP) and dimethylallyl diphosphate (DMAPP). Acts in the terminal step of the DOXP/MEP pathway for isoprenoid precursor biosynthesis. This is 4-hydroxy-3-methylbut-2-enyl diphosphate reductase from Chlamydia abortus (strain DSM 27085 / S26/3) (Chlamydophila abortus).